The primary structure comprises 105 residues: uncharacterized protein (105 aa).

Residues 80-105 (TGGPTSSTCTRRSDLATGRGSDRRPD) are disordered.

This is an uncharacterized protein from Micromonospora rosea.